Reading from the N-terminus, the 733-residue chain is Photosystem I P700 chlorophyll a apoprotein A2 (733 aa).

The next 8 membrane-spanning stretches (helical) occupy residues 46–69 (IFAS…FHVA), 134–157 (LYKG…LHLQ), 174–198 (LNHH…HVAI), 272–290 (MAHH…GHMY), 329–352 (LHMQ…QHMY), 368–394 (AALY…IFFV), 416–438 (AIIS…LYIH), and 516–534 (FLVH…LILV). The [4Fe-4S] cluster site is built by Cys558 and Cys567. The next 2 helical transmembrane spans lie at 574–595 (AFYL…YWHW) and 642–664 (LSVW…MFLI). The chlorophyll a site is built by His653, Met661, and Tyr669. Residue Trp670 coordinates phylloquinone. The chain crosses the membrane as a helical span at residues 706–726 (LVGLVHFSVGYILTYAAFVIA).

The protein belongs to the PsaA/PsaB family. In terms of assembly, the PsaA/B heterodimer binds the P700 chlorophyll special pair and subsequent electron acceptors. PSI consists of a core antenna complex that captures photons, and an electron transfer chain that converts photonic excitation into a charge separation. The eukaryotic PSI reaction center is composed of at least 11 subunits. It depends on P700 is a chlorophyll a/chlorophyll a' dimer, A0 is one or more chlorophyll a, A1 is one or both phylloquinones and FX is a shared 4Fe-4S iron-sulfur center. as a cofactor.

The protein localises to the plastid. Its subcellular location is the chloroplast thylakoid membrane. It catalyses the reaction reduced [plastocyanin] + hnu + oxidized [2Fe-2S]-[ferredoxin] = oxidized [plastocyanin] + reduced [2Fe-2S]-[ferredoxin]. PsaA and PsaB bind P700, the primary electron donor of photosystem I (PSI), as well as the electron acceptors A0, A1 and FX. PSI is a plastocyanin/cytochrome c6-ferredoxin oxidoreductase, converting photonic excitation into a charge separation, which transfers an electron from the donor P700 chlorophyll pair to the spectroscopically characterized acceptors A0, A1, FX, FA and FB in turn. Oxidized P700 is reduced on the lumenal side of the thylakoid membrane by plastocyanin or cytochrome c6. This chain is Photosystem I P700 chlorophyll a apoprotein A2, found in Thalassiosira pseudonana (Marine diatom).